Here is a 452-residue protein sequence, read N- to C-terminus: Interferon-induced protein 44-like (452 aa).

A TLDc domain is found at 1 to 159 (MEVTTRLTWN…YLECEVFRVE (159 aa)).

It belongs to the IFI44 family. Interacts with FKBP5; this interaction modulates IKBKB and IKBKE kinase activities.

The protein localises to the cytoplasm. In terms of biological role, type I interferon-stimulated gene (ISG) that plays a critical role in antiviral and antibacterial activity. During bacterial infection, promotes macrophage differentiation and facilitates inflammatory cytokine secretion. Plays a role in the control of respiratory syncytial virus/RSV infection, reducing the ability of the virus to replicate. Exhibits a low antiviral activity against hepatitis C virus. Also acts as a feedback regulator of IFN responses by negatively regulating IKBKB and IKBKE kinase activities through interaction with FKBP5. The polypeptide is Interferon-induced protein 44-like (IFI44L) (Homo sapiens (Human)).